Here is a 342-residue protein sequence, read N- to C-terminus: Transmembrane protein 59-like (342 aa).

A signal peptide spans 1–24 (MAAVALMPPPLLLLLLLASPPAAS). The N-linked (GlcNAc...) asparagine glycan is linked to Asn97. Residues 268 to 290 (WILACCLFLSVLVMLWLSCSTLV) traverse the membrane as a helical segment. Residues 340-342 (TKL) carry the Microbody targeting signal motif.

The protein belongs to the TMEM59 family. As to expression, expressed preferentially at high level in the brain.

The protein resides in the golgi apparatus membrane. In terms of biological role, modulates the O-glycosylation and complex N-glycosylation steps occurring during the Golgi maturation of APP. Inhibits APP transport to the cell surface and further shedding. This is Transmembrane protein 59-like (TMEM59L) from Homo sapiens (Human).